Consider the following 122-residue polypeptide: Large ribosomal subunit protein uL14 (122 aa).

Belongs to the universal ribosomal protein uL14 family. In terms of assembly, part of the 50S ribosomal subunit. Forms a cluster with proteins L3 and L19. In the 70S ribosome, L14 and L19 interact and together make contacts with the 16S rRNA in bridges B5 and B8.

Binds to 23S rRNA. Forms part of two intersubunit bridges in the 70S ribosome. In Anaeromyxobacter sp. (strain Fw109-5), this protein is Large ribosomal subunit protein uL14.